The chain runs to 362 residues: Oxygen-dependent coproporphyrinogen-III oxidase (362 aa).

Positions 12 to 31 are disordered; sequence RQENDQSTPQLELPPTDSRD. Ser118 contacts substrate. Positions 122 and 132 each coordinate a divalent metal cation. His132 acts as the Proton donor in catalysis. 134–136 contributes to the substrate binding site; the sequence is NYR. A divalent metal cation is bound by residues His166 and His196. An important for dimerization region spans residues 286-321; it reads YVEFNLVWDRGTIFGLQTNGRTESILMSLPPLVRWE.

The protein belongs to the aerobic coproporphyrinogen-III oxidase family. In terms of assembly, homodimer. The cofactor is a divalent metal cation.

The protein localises to the cytoplasm. The catalysed reaction is coproporphyrinogen III + O2 + 2 H(+) = protoporphyrinogen IX + 2 CO2 + 2 H2O. It functions in the pathway porphyrin-containing compound metabolism; protoporphyrin-IX biosynthesis; protoporphyrinogen-IX from coproporphyrinogen-III (O2 route): step 1/1. In terms of biological role, involved in the heme and chlorophyll biosynthesis. Catalyzes the aerobic oxidative decarboxylation of propionate groups of rings A and B of coproporphyrinogen-III to yield the vinyl groups in protoporphyrinogen-IX. This chain is Oxygen-dependent coproporphyrinogen-III oxidase, found in Synechococcus sp. (strain CC9902).